The sequence spans 98 residues: Protein S100-A13 (98 aa).

Residues 18–53 enclose the EF-hand domain; the sequence is STFFTFAGREGRKGSLNINEFKELATQQLPHLLKDV. S32, E37, D64, N66, D68, E70, and E75 together coordinate Ca(2+). S32 is modified (phosphoserine).

Belongs to the S-100 family. As to quaternary structure, homodimer. Part of a copper-dependent multiprotein complex containing S100A13, FGF1 and SYT1. Interacts with FGF1 and SYT1. Interacts with IL1A.

The protein resides in the cytoplasm. It is found in the secreted. Functionally, plays a role in the export of proteins that lack a signal peptide and are secreted by an alternative pathway. Binds two calcium ions per subunit. Binds one copper ion. Binding of one copper ion does not interfere with calcium binding. Required for the copper-dependent stress-induced export of IL1A and FGF1. The calcium-free protein binds to lipid vesicles containing phosphatidylserine, but not to vesicles containing phosphatidylcholine. The sequence is that of Protein S100-A13 (S100a13) from Mus musculus (Mouse).